A 118-amino-acid chain; its full sequence is Beta-2-microglobulin (118 aa).

The N-terminal stretch at 1 to 20 (MARVVALVLLGLLSLTGLEA) is a signal peptide. In terms of domain architecture, Ig-like C1-type spans 22-115 (PRVPKVQVYS…LKDPLIVKWD (94 aa)). The cysteines at positions 45 and 99 are disulfide-linked.

Belongs to the beta-2-microglobulin family. In terms of assembly, heterodimer of an alpha chain and a beta chain. Beta-2-microglobulin is the beta-chain of major histocompatibility complex class I molecules.

The protein resides in the secreted. In terms of biological role, component of the class I major histocompatibility complex (MHC). Involved in the presentation of peptide antigens to the immune system. The sequence is that of Beta-2-microglobulin (B2M) from Equus caballus (Horse).